Consider the following 228-residue polypeptide: GDT1-like protein 5 (228 aa).

G2 carries the post-translational modification N-acetylglycine. 6 consecutive transmembrane segments (helical) span residues 12-32 (LAMT…AILA), 39-59 (LVLA…ATLG), 71-91 (THHI…WDGF), 133-153 (PFLT…NFFG), 173-193 (LGVV…AVLG), and 205-225 (IVAL…LLTP).

Belongs to the GDT1 family.

The protein localises to the membrane. The protein is GDT1-like protein 5 of Arabidopsis thaliana (Mouse-ear cress).